We begin with the raw amino-acid sequence, 535 residues long: Heat shock factor protein 2 (535 aa).

Glycyl lysine isopeptide (Lys-Gly) (interchain with G-Cter in SUMO2) cross-links involve residues Lys2, Lys82, Lys135, Lys139, Lys151, Lys210, Lys218, and Lys237. Residues 7-112 mediate DNA binding; it reads VPAFLSKLWT…LLENIKRKVS (106 aa). The tract at residues 119–192 is hydrophobic repeat HR-A/B; that stretch reads NKIRQEDLTK…VTLVQNNQLV (74 aa). The segment at 298 to 325 is disordered; that stretch reads QSGEQSEPAREPLRVGSAGSSSPLMSSA. The segment covering 313–325 has biased composition (low complexity); it reads GSAGSSSPLMSSA. The segment at 359–384 is hydrophobic repeat HR-C; sequence LLDYLDSIDCSLEDFQAMLSGRQFSI. The segment at 418-437 is disordered; the sequence is TKSSVVQHVSEEGRKSKSKP. Residues 426–437 are compositionally biased toward basic and acidic residues; sequence VSEEGRKSKSKP.

It belongs to the HSF family. As to quaternary structure, DNA-binding homotrimer in stressed or heat shocked cells, otherwise found as a homodimer. Isoform alpha is expressed predominantly in testis while isoform beta is expressed predominantly in heart and brain.

Its subcellular location is the cytoplasm. The protein localises to the nucleus. Functionally, DNA-binding protein that specifically binds heat shock promoter elements (HSE) and activates transcription. In higher eukaryotes, HSF is unable to bind to the HSE unless the cells are heat shocked. HSF2 is expressed in a form that binds DNA constitutively but loses DNA binding by incubation at greater than 41 degrees C. This is Heat shock factor protein 2 (Hsf2) from Mus musculus (Mouse).